We begin with the raw amino-acid sequence, 343 residues long: Methylthioribose-1-phosphate isomerase (343 aa).

Residues 48–50 (RGA), arginine 88, and glutamine 193 contribute to the substrate site. Aspartate 234 (proton donor) is an active-site residue. Residue 244-245 (NK) coordinates substrate.

This sequence belongs to the eIF-2B alpha/beta/delta subunits family. MtnA subfamily.

It catalyses the reaction 5-(methylsulfanyl)-alpha-D-ribose 1-phosphate = 5-(methylsulfanyl)-D-ribulose 1-phosphate. It participates in amino-acid biosynthesis; L-methionine biosynthesis via salvage pathway; L-methionine from S-methyl-5-thio-alpha-D-ribose 1-phosphate: step 1/6. Its function is as follows. Catalyzes the interconversion of methylthioribose-1-phosphate (MTR-1-P) into methylthioribulose-1-phosphate (MTRu-1-P). In Thermotoga maritima (strain ATCC 43589 / DSM 3109 / JCM 10099 / NBRC 100826 / MSB8), this protein is Methylthioribose-1-phosphate isomerase.